The sequence spans 309 residues: Homoserine kinase (309 aa).

Residue 91-101 (PIGSGLGSSAC) coordinates ATP.

It belongs to the GHMP kinase family. Homoserine kinase subfamily.

It is found in the cytoplasm. It catalyses the reaction L-homoserine + ATP = O-phospho-L-homoserine + ADP + H(+). It functions in the pathway amino-acid biosynthesis; L-threonine biosynthesis; L-threonine from L-aspartate: step 4/5. Functionally, catalyzes the ATP-dependent phosphorylation of L-homoserine to L-homoserine phosphate. This Yersinia enterocolitica serotype O:8 / biotype 1B (strain NCTC 13174 / 8081) protein is Homoserine kinase.